The following is a 296-amino-acid chain: Fructose-bisphosphate aldolase class 1 (296 aa).

Glu175 (proton acceptor) is an active-site residue. Lys212 functions as the Schiff-base intermediate with dihydroxyacetone-P in the catalytic mechanism.

The protein belongs to the class I fructose-bisphosphate aldolase family.

It catalyses the reaction beta-D-fructose 1,6-bisphosphate = D-glyceraldehyde 3-phosphate + dihydroxyacetone phosphate. The protein operates within carbohydrate degradation; glycolysis; D-glyceraldehyde 3-phosphate and glycerone phosphate from D-glucose: step 4/4. The sequence is that of Fructose-bisphosphate aldolase class 1 (fda) from Staphylococcus carnosus (strain TM300).